The sequence spans 210 residues: Orotate phosphoribosyltransferase (210 aa).

Residues Arg-94, Lys-98, His-100, and 120-128 (EDLISTGGS) contribute to the 5-phospho-alpha-D-ribose 1-diphosphate site. Ser-124 provides a ligand contact to orotate.

This sequence belongs to the purine/pyrimidine phosphoribosyltransferase family. PyrE subfamily. In terms of assembly, homodimer. It depends on Mg(2+) as a cofactor.

The catalysed reaction is orotidine 5'-phosphate + diphosphate = orotate + 5-phospho-alpha-D-ribose 1-diphosphate. Its pathway is pyrimidine metabolism; UMP biosynthesis via de novo pathway; UMP from orotate: step 1/2. Catalyzes the transfer of a ribosyl phosphate group from 5-phosphoribose 1-diphosphate to orotate, leading to the formation of orotidine monophosphate (OMP). This is Orotate phosphoribosyltransferase from Halalkalibacterium halodurans (strain ATCC BAA-125 / DSM 18197 / FERM 7344 / JCM 9153 / C-125) (Bacillus halodurans).